The following is a 317-amino-acid chain: SWI/SNF-related matrix-associated actin-dependent regulator of chromatin subfamily E member 1-related (317 aa).

Over residues 1 to 17 (MSHGPKQPGAAAAPAGG) the composition is skewed to low complexity. Positions 1–71 (MSHGPKQPGA…RKKILPNGPK (71 aa)) are disordered. A Glycyl lysine isopeptide (Lys-Gly) (interchain with G-Cter in SUMO2) cross-link involves residue K31. Residues 31-52 (KQERGEGPRAGEKGSHEEEPVK) show a composition bias toward basic and acidic residues. Basic residues predominate over residues 53–65 (KRGWPKGKKRKKI). The HMG box DNA-binding region spans 70 to 138 (PKAPVTGYVR…QYMKELRAYQ (69 aa)). S160 is subject to Phosphoserine. A coiled-coil region spans residues 190–257 (EEFLDQNKAR…LQQQLQAVRQ (68 aa)).

As to quaternary structure, component of a BHC histone deacetylase complex that contains HDAC1, HDAC2, HMG20B/BRAF35, KDM1A, RCOR1/CoREST and PHF21A/BHC80. The BHC complex may also contain ZMYM2, ZNF217, ZMYM3, GSE1 and GTF2I. Interacts with the BRCA2 tumor suppressor protein. Interacts with DTNB. In terms of tissue distribution, ubiquitously expressed in adult tissues.

Its subcellular location is the nucleus. It localises to the chromosome. Its function is as follows. Required for correct progression through G2 phase of the cell cycle and entry into mitosis. Required for RCOR1/CoREST mediated repression of neuronal specific gene promoters. This is SWI/SNF-related matrix-associated actin-dependent regulator of chromatin subfamily E member 1-related (HMG20B) from Homo sapiens (Human).